Here is a 457-residue protein sequence, read N- to C-terminus: Streptogrisin-C (457 aa).

Positions Met1–Ala34 form a signal peptide, tat-type signal. Positions Asp35–Leu202 are excised as a propeptide. A catalytic region spans residues Ala203–Ser393. A disulfide bridge connects residues Cys219 and Cys239. Residues His238 and Asp266 each act as charge relay system in the active site. 2 disulfides stabilise this stretch: Cys305-Cys315 and Cys341-Cys368. The active-site Charge relay system is the Ser347. The tract at residues Ser393–Gly412 is disordered. The segment at Gly394–Thr413 is linker. Residues Thr399–Asp408 show a composition bias toward pro residues. In terms of domain architecture, Chitin-binding type-3 spans Ala415 to Val457.

Belongs to the peptidase S1 family. In terms of assembly, monomer. Post-translationally, predicted to be exported by the Tat system. The position of the signal peptide cleavage has not been experimentally proven.

In terms of biological role, hydrolysis of proteins with specificity similar to chymotrypsin. May be specialized for the degradation of chitin-linked proteins. Has a primary specificity for large aliphatic or aromatic amino acids. This chain is Streptogrisin-C (sprC), found in Streptomyces griseus.